A 178-amino-acid chain; its full sequence is CDP-diacylglycerol--glycerol-3-phosphate 3-phosphatidyltransferase (178 aa).

Transmembrane regions (helical) follow at residues 5–25 (PNYL…LFYI), 32–52 (KLGA…GYIA), 61–81 (FGKM…TIML), and 145–165 (IIYL…LTII).

Belongs to the CDP-alcohol phosphatidyltransferase class-I family.

It localises to the cell membrane. It carries out the reaction a CDP-1,2-diacyl-sn-glycerol + sn-glycerol 3-phosphate = a 1,2-diacyl-sn-glycero-3-phospho-(1'-sn-glycero-3'-phosphate) + CMP + H(+). The protein operates within phospholipid metabolism; phosphatidylglycerol biosynthesis; phosphatidylglycerol from CDP-diacylglycerol: step 1/2. In terms of biological role, this protein catalyzes the committed step to the synthesis of the acidic phospholipids. The chain is CDP-diacylglycerol--glycerol-3-phosphate 3-phosphatidyltransferase (pgsA) from Rickettsia typhi (strain ATCC VR-144 / Wilmington).